The sequence spans 89 residues: Small ribosomal subunit protein uS14 (89 aa).

It belongs to the universal ribosomal protein uS14 family. As to quaternary structure, part of the 30S ribosomal subunit. Contacts proteins S3 and S10.

In terms of biological role, binds 16S rRNA, required for the assembly of 30S particles and may also be responsible for determining the conformation of the 16S rRNA at the A site. The polypeptide is Small ribosomal subunit protein uS14 (Pelodictyon phaeoclathratiforme (strain DSM 5477 / BU-1)).